The following is a 319-amino-acid chain: Cobalamin biosynthesis protein CbiB (319 aa).

The next 5 membrane-spanning stretches (helical) occupy residues 56 to 76 (VMWI…LALA), 82 to 102 (WLGW…RSLA), 153 to 173 (VDGI…LAMA), 204 to 224 (VANY…AGLC), and 296 to 316 (LMWG…CWLS).

The protein belongs to the CobD/CbiB family.

The protein localises to the cell membrane. The protein operates within cofactor biosynthesis; adenosylcobalamin biosynthesis. In terms of biological role, converts cobyric acid to cobinamide by the addition of aminopropanol on the F carboxylic group. However, the true cosubstrate could be (R)-1-amino-2-propanol O-2-phosphate, leading to cobinamide phosphate. The protein is Cobalamin biosynthesis protein CbiB of Salmonella arizonae (strain ATCC BAA-731 / CDC346-86 / RSK2980).